The following is a 428-amino-acid chain: Chaperone SurA (428 aa).

An N-terminal signal peptide occupies residues 1-13 (MLGALLLSGAVHA). PpiC domains follow at residues 164–265 (SEEF…KLLE) and 276–375 (RDEV…EVLG).

The protein localises to the periplasm. It catalyses the reaction [protein]-peptidylproline (omega=180) = [protein]-peptidylproline (omega=0). Chaperone involved in the correct folding and assembly of outer membrane proteins. Recognizes specific patterns of aromatic residues and the orientation of their side chains, which are found more frequently in integral outer membrane proteins. May act in both early periplasmic and late outer membrane-associated steps of protein maturation. This Pseudomonas syringae pv. tomato (strain ATCC BAA-871 / DC3000) protein is Chaperone SurA.